A 116-amino-acid chain; its full sequence is Large ribosomal subunit protein uL18 (116 aa).

It belongs to the universal ribosomal protein uL18 family. Part of the 50S ribosomal subunit; part of the 5S rRNA/L5/L18/L25 subcomplex. Contacts the 5S and 23S rRNAs.

In terms of biological role, this is one of the proteins that bind and probably mediate the attachment of the 5S RNA into the large ribosomal subunit, where it forms part of the central protuberance. This chain is Large ribosomal subunit protein uL18, found in Chromohalobacter salexigens (strain ATCC BAA-138 / DSM 3043 / CIP 106854 / NCIMB 13768 / 1H11).